Consider the following 526-residue polypeptide: Phosphoenolpyruvate carboxylase (526 aa).

Belongs to the PEPCase type 2 family. As to quaternary structure, homotetramer. Requires Mg(2+) as cofactor.

It carries out the reaction oxaloacetate + phosphate = phosphoenolpyruvate + hydrogencarbonate. Catalyzes the irreversible beta-carboxylation of phosphoenolpyruvate (PEP) to form oxaloacetate (OAA), a four-carbon dicarboxylic acid source for the tricarboxylic acid cycle. The protein is Phosphoenolpyruvate carboxylase of Methanosarcina mazei (strain ATCC BAA-159 / DSM 3647 / Goe1 / Go1 / JCM 11833 / OCM 88) (Methanosarcina frisia).